The primary structure comprises 285 residues: ATP phosphoribosyltransferase (285 aa).

The protein belongs to the ATP phosphoribosyltransferase family. Long subfamily. The cofactor is Mg(2+).

The protein localises to the cytoplasm. It carries out the reaction 1-(5-phospho-beta-D-ribosyl)-ATP + diphosphate = 5-phospho-alpha-D-ribose 1-diphosphate + ATP. Its pathway is amino-acid biosynthesis; L-histidine biosynthesis; L-histidine from 5-phospho-alpha-D-ribose 1-diphosphate: step 1/9. With respect to regulation, feedback inhibited by histidine. Functionally, catalyzes the condensation of ATP and 5-phosphoribose 1-diphosphate to form N'-(5'-phosphoribosyl)-ATP (PR-ATP). Has a crucial role in the pathway because the rate of histidine biosynthesis seems to be controlled primarily by regulation of HisG enzymatic activity. The protein is ATP phosphoribosyltransferase of Streptomyces coelicolor (strain ATCC BAA-471 / A3(2) / M145).